The following is a 633-amino-acid chain: Chaperone protein DnaK (633 aa).

At Thr198 the chain carries Phosphothreonine; by autocatalysis. Residues 599-633 (QQASQETPGDGDAGAAGAKKKDDDDVVDADYEEVK) form a disordered region. Residues 622 to 633 (DDVVDADYEEVK) are compositionally biased toward acidic residues.

The protein belongs to the heat shock protein 70 family.

In terms of biological role, acts as a chaperone. The chain is Chaperone protein DnaK from Desulfotalea psychrophila (strain LSv54 / DSM 12343).